A 5488-amino-acid polypeptide reads, in one-letter code: Polyketide synthase PksN (5488 aa).

A condensation region spans residues 3–301 (RQLKSPLSEG…NMMAVRSKNI (299 aa)). One copy of the WD 1 repeat lies at 165–205 (QQPSTADYYDFVDWENRMLTGREGEEHLAYWKEQLSGSLPV). The segment at 493-903 (TYKEVDEKST…EFPGILDQAV (411 aa)) is adenylation. One copy of the WD 2 repeat lies at 965 to 1006 (RKELEKREIVFNRRKPNHLQLTEIEDQVLRIWEETLKVSGFG). Residues 983 to 1058 (LQLTEIEDQV…AISEYILEMK (76 aa)) enclose the Carrier 1 domain. Residue serine 1018 is modified to O-(pantetheine 4'-phosphoryl)serine. A Ketosynthase family 3 (KS3) 1 domain is found at 1089-1515 (DDSVAIVGIS…GTNAHAIFEQ (427 aa)). Active-site for beta-ketoacyl synthase 1 activity residues include cysteine 1261, histidine 1397, and histidine 1437. The interval 1700–1826 (HPLVHHNTSV…GKAELIQLKR (127 aa)) is N-terminal hotdog fold 1. Residues 1700–1992 (HPLVHHNTSV…TRVMEADIQT (293 aa)) enclose the PKS/mFAS DH 1 domain. Histidine 1729 serves as the catalytic Proton acceptor; for dehydratase activity 1. The segment at 1840 to 1992 (DQSKMDAASF…TRVMEADIQT (153 aa)) is C-terminal hotdog fold 1. Aspartate 1900 functions as the Proton donor; for dehydratase activity 1 in the catalytic mechanism. Residues 2165–2204 (KQAKGDGSKPWKDNGVYLISGGAGGLGHIFAKEIAEQTKN) form a WD 3 repeat. The Carrier 2 domain maps to 2448 to 2525 (SLLDKVKAML…AFGKHLSEEY (78 aa)). Position 2485 is an O-(pantetheine 4'-phosphoryl)serine (serine 2485). Positions 2576-3012 (PEPIAIVGIS…GVNAHVIIEE (437 aa)) constitute a Ketosynthase family 3 (KS3) 2 domain. Active-site for beta-ketoacyl synthase 2 activity residues include cysteine 2747, histidine 2882, and histidine 2928. A coiled-coil region spans residues 3038 to 3109 (KNEARLKEHA…AAEKSGVEDV (72 aa)). An N-terminal hotdog fold 2 region spans residues 3207-3332 (HPLMHQNTSN…GSAVLNPAEN (126 aa)). The 286-residue stretch at 3207–3492 (HPLMHQNTSN…FRAAEGGSGS (286 aa)) folds into the PKS/mFAS DH 2 domain. Histidine 3236 (proton acceptor; for dehydratase activity 2) is an active-site residue. The segment at 3346–3492 (QESHFSVNEV…FRAAEGGSGS (147 aa)) is C-terminal hotdog fold 2. Aspartate 3408 acts as the Proton donor; for dehydratase activity 2 in catalysis. Residues 3626–3655 (DSHENVESVIEKLKENKRHTEDQHIKYEKG) adopt a coiled-coil conformation. One copy of the WD 4 repeat lies at 3666–3705 (QIDDREISMPWRDKGVYLITGGAGGLGFIFAKEIARQAEQ). A Carrier 3 domain is found at 3952–4026 (DHIQEVLKQT…AFAGYLSEEY (75 aa)). An O-(pantetheine 4'-phosphoryl)serine modification is found at serine 3986. Residues 4076-4511 (PEPIAIVGMS…GVNAHVVIEE (436 aa)) form the Ketosynthase family 3 (KS3) 3 domain. Residues cysteine 4245, histidine 4380, and histidine 4427 each act as for beta-ketoacyl synthase 3 activity in the active site. Residues 4706–4830 (HPLIHVNTSD…GSASIRGAGD (125 aa)) are N-terminal hotdog fold 3. One can recognise a PKS/mFAS DH 3 domain in the interval 4706 to 4988 (HPLIHVNTSD…SRLLEEGIQP (283 aa)). Histidine 4735 functions as the Proton acceptor; for dehydratase activity 3 in the catalytic mechanism. The segment at 4844-4988 (SLSTLSHDQC…SRLLEEGIQP (145 aa)) is C-terminal hotdog fold 3. Aspartate 4906 (proton donor; for dehydratase activity 3) is an active-site residue. One copy of the WD 5 repeat lies at 5206 to 5244 (HNNQPVHTKYKHGGVYVVIGGAGGIGEAWSEYMIRTYQA). A coiled-coil region spans residues 5275 to 5303 (IQADAANREELERAYETMKQTHREINGII).

It belongs to the ATP-dependent AMP-binding enzyme family. Pantetheine 4'-phosphate serves as cofactor.

It is found in the cytoplasm. It functions in the pathway antibiotic biosynthesis; bacillaene biosynthesis. Functionally, involved in some intermediate steps for the synthesis of the antibiotic polyketide bacillaene which is involved in secondary metabolism. The polypeptide is Polyketide synthase PksN (pksN) (Bacillus subtilis (strain 168)).